The sequence spans 313 residues: Acetylglutamate kinase (313 aa).

Residues 84 to 85 (GG), Arg106, and Asn210 contribute to the substrate site.

This sequence belongs to the acetylglutamate kinase family. ArgB subfamily.

It is found in the cytoplasm. It carries out the reaction N-acetyl-L-glutamate + ATP = N-acetyl-L-glutamyl 5-phosphate + ADP. Its pathway is amino-acid biosynthesis; L-arginine biosynthesis; N(2)-acetyl-L-ornithine from L-glutamate: step 2/4. In terms of biological role, catalyzes the ATP-dependent phosphorylation of N-acetyl-L-glutamate. This is Acetylglutamate kinase from Gluconacetobacter diazotrophicus (strain ATCC 49037 / DSM 5601 / CCUG 37298 / CIP 103539 / LMG 7603 / PAl5).